Reading from the N-terminus, the 186-residue chain is Ribosome-recycling factor (186 aa).

It belongs to the RRF family.

The protein resides in the cytoplasm. In terms of biological role, responsible for the release of ribosomes from messenger RNA at the termination of protein biosynthesis. May increase the efficiency of translation by recycling ribosomes from one round of translation to another. The chain is Ribosome-recycling factor from Cupriavidus pinatubonensis (strain JMP 134 / LMG 1197) (Cupriavidus necator (strain JMP 134)).